The primary structure comprises 58 residues: Succinate dehydrogenase subunit 8B, mitochondrial (58 aa).

Component of complex II composed of eight subunits in plants: four classical SDH subunits SDH1, SDH2, SDH3 and SDH4 (a flavoprotein (FP), an iron-sulfur protein (IP), and a cytochrome b composed of a large and a small subunit.), as well as four subunits unknown in mitochondria from bacteria and heterotrophic eukaryotes.

Its subcellular location is the mitochondrion inner membrane. Its pathway is carbohydrate metabolism; tricarboxylic acid cycle. The chain is Succinate dehydrogenase subunit 8B, mitochondrial from Oryza sativa subsp. japonica (Rice).